Consider the following 271-residue polypeptide: Aquaporin-2 (271 aa).

Residues 1–11 are Cytoplasmic-facing; that stretch reads MWELRSIAFSR. The chain crosses the membrane as a helical span at residues 12 to 32; that stretch reads AVFAEFLATLLFVFFGLGSAL. Topologically, residues 33–40 are extracellular; that stretch reads NWPQALPS. The helical transmembrane segment at 41–59 threads the bilayer; sequence VLQIAMAFGLGIGTLVQAL. Over 60-64 the chain is Cytoplasmic; it reads GHISG. An intramembrane region (discontinuously helical) is located at residues 65 to 74; that stretch reads AHINPAVTVA. Positions 68–70 match the NPA 1 motif; it reads NPA. Topologically, residues 75-85 are cytoplasmic; that stretch reads CLVGCHVSVLR. A helical membrane pass occupies residues 86-107; the sequence is AAFYVAAQLLGAVAGAALLHEI. Topologically, residues 108–127 are extracellular; that stretch reads TPADIRGDLAVNALSNSTTA. A glycan (N-linked (GlcNAc...) asparagine) is linked at N123. Residues 128 to 148 traverse the membrane as a helical segment; that stretch reads GQAVTVELFLTLQLVLCIFAS. Topologically, residues 149–156 are cytoplasmic; that stretch reads TDERRGEN. The chain crosses the membrane as a helical span at residues 157–176; that stretch reads PGTPALSIGFSVALGHLLGI. Residues 177–180 are Extracellular-facing; the sequence is HYTG. The discontinuously helical intramembrane region spans 181–193; sequence CSMNPARSLAPAV. An NPA 2 motif is present at residues 184 to 186; the sequence is NPA. The Extracellular portion of the chain corresponds to 194–201; it reads VTGKFDDH. A helical transmembrane segment spans residues 202–222; sequence WVFWIGPLVGAILGSLLYNYV. The Cytoplasmic segment spans residues 223–271; sequence LFPPAKSLSERLAVLKGLEPDTDWEEREVRRRQSVELHSPQSLPRGTKA. The tract at residues 248-271 is disordered; the sequence is EREVRRRQSVELHSPQSLPRGTKA. S256 is subject to Phosphoserine; by PKA. Over residues 261 to 271 the composition is skewed to polar residues; sequence SPQSLPRGTKA.

This sequence belongs to the MIP/aquaporin (TC 1.A.8) family. In terms of assembly, homotetramer. Interacts with micropeptide MIAC; the interaction leads to a reduction of filamentous actin fibers and inhibition of the EREG/EGFR signaling pathway. In terms of processing, ser-256 phosphorylation is necessary and sufficient for expression at the apical membrane. Endocytosis is not phosphorylation-dependent. Post-translationally, N-glycosylated. As to expression, expressed in collecting tubules in kidney medulla (at protein level). Detected in kidney.

It is found in the apical cell membrane. Its subcellular location is the basolateral cell membrane. The protein localises to the cell membrane. The protein resides in the cytoplasmic vesicle membrane. It localises to the golgi apparatus. It is found in the trans-Golgi network membrane. The enzyme catalyses H2O(in) = H2O(out). It catalyses the reaction glycerol(in) = glycerol(out). Forms a water-specific channel that provides the plasma membranes of renal collecting duct with high permeability to water, thereby permitting water to move in the direction of an osmotic gradient. Plays an essential role in renal water homeostasis. Could also be permeable to glycerol. This chain is Aquaporin-2, found in Homo sapiens (Human).